The primary structure comprises 336 residues: Mitochondrial thiamine diphosphate carrier 1 (336 aa).

The next 6 membrane-spanning stretches (helical) occupy residues 11 to 27 (RRAL…GGIS), 88 to 105 (VPAL…FTVL), 127 to 150 (YLSY…FDLL), 182 to 199 (LYSG…YAGL), 230 to 246 (SVSS…AGTF), and 303 to 322 (GLFP…FVVY). Solcar repeat units follow at residues 11 to 111 (RRAL…LKTF), 124 to 210 (LSPY…FKRS), and 231 to 328 (VSSF…ISDW).

It belongs to the mitochondrial carrier (TC 2.A.29) family. As to expression, ubiquitous with highest expression in pollen.

The protein resides in the mitochondrion inner membrane. Mitochondrial transporter that mediates uptake of thiamine diphosphate (ThDP) into mitochondria. The chain is Mitochondrial thiamine diphosphate carrier 1 from Zea mays (Maize).